The chain runs to 276 residues: Formamidopyrimidine-DNA glycosylase (276 aa).

P2 (schiff-base intermediate with DNA) is an active-site residue. The Proton donor role is filled by E3. K60 functions as the Proton donor; for beta-elimination activity in the catalytic mechanism. The DNA site is built by H93, R112, and R155. The segment at 240 to 274 (LVYGRKDEACTKCGAEIIRFVVGGRGTHICPDCQK) adopts an FPG-type zinc-finger fold. R264 acts as the Proton donor; for delta-elimination activity in catalysis.

It belongs to the FPG family. In terms of assembly, monomer. It depends on Zn(2+) as a cofactor.

It catalyses the reaction Hydrolysis of DNA containing ring-opened 7-methylguanine residues, releasing 2,6-diamino-4-hydroxy-5-(N-methyl)formamidopyrimidine.. The enzyme catalyses 2'-deoxyribonucleotide-(2'-deoxyribose 5'-phosphate)-2'-deoxyribonucleotide-DNA = a 3'-end 2'-deoxyribonucleotide-(2,3-dehydro-2,3-deoxyribose 5'-phosphate)-DNA + a 5'-end 5'-phospho-2'-deoxyribonucleoside-DNA + H(+). In terms of biological role, involved in base excision repair of DNA damaged by oxidation or by mutagenic agents. Acts as a DNA glycosylase that recognizes and removes damaged bases. Has a preference for oxidized purines, such as 7,8-dihydro-8-oxoguanine (8-oxoG). Has AP (apurinic/apyrimidinic) lyase activity and introduces nicks in the DNA strand. Cleaves the DNA backbone by beta-delta elimination to generate a single-strand break at the site of the removed base with both 3'- and 5'-phosphates. The protein is Formamidopyrimidine-DNA glycosylase of Brevibacillus brevis (strain 47 / JCM 6285 / NBRC 100599).